Reading from the N-terminus, the 377-residue chain is Nitric oxide reductase FlRd-NAD(+) reductase (377 aa).

Belongs to the FAD-dependent oxidoreductase family. It depends on FAD as a cofactor.

It localises to the cytoplasm. The enzyme catalyses 2 reduced [nitric oxide reductase rubredoxin domain] + NAD(+) + H(+) = 2 oxidized [nitric oxide reductase rubredoxin domain] + NADH. Its pathway is nitrogen metabolism; nitric oxide reduction. One of at least two accessory proteins for anaerobic nitric oxide (NO) reductase. Reduces the rubredoxin moiety of NO reductase. In Escherichia coli O157:H7, this protein is Nitric oxide reductase FlRd-NAD(+) reductase.